Here is a 120-residue protein sequence, read N- to C-terminus: Large ribosomal subunit protein uL22 (120 aa).

This sequence belongs to the universal ribosomal protein uL22 family. In terms of assembly, part of the 50S ribosomal subunit.

Its function is as follows. This protein binds specifically to 23S rRNA; its binding is stimulated by other ribosomal proteins, e.g. L4, L17, and L20. It is important during the early stages of 50S assembly. It makes multiple contacts with different domains of the 23S rRNA in the assembled 50S subunit and ribosome. In terms of biological role, the globular domain of the protein is located near the polypeptide exit tunnel on the outside of the subunit, while an extended beta-hairpin is found that lines the wall of the exit tunnel in the center of the 70S ribosome. In Corynebacterium efficiens (strain DSM 44549 / YS-314 / AJ 12310 / JCM 11189 / NBRC 100395), this protein is Large ribosomal subunit protein uL22.